The chain runs to 316 residues: 4-hydroxy-3-methylbut-2-enyl diphosphate reductase (316 aa).

Cysteine 12 serves as a coordination point for [4Fe-4S] cluster. Histidine 43 and histidine 81 together coordinate (2E)-4-hydroxy-3-methylbut-2-enyl diphosphate. Positions 43 and 81 each coordinate dimethylallyl diphosphate. Isopentenyl diphosphate is bound by residues histidine 43 and histidine 81. [4Fe-4S] cluster is bound at residue cysteine 103. Histidine 131 is a binding site for (2E)-4-hydroxy-3-methylbut-2-enyl diphosphate. Histidine 131 serves as a coordination point for dimethylallyl diphosphate. An isopentenyl diphosphate-binding site is contributed by histidine 131. Residue glutamate 133 is the Proton donor of the active site. Threonine 170 contacts (2E)-4-hydroxy-3-methylbut-2-enyl diphosphate. Residue cysteine 198 coordinates [4Fe-4S] cluster. The (2E)-4-hydroxy-3-methylbut-2-enyl diphosphate site is built by serine 226, asparagine 228, and serine 271. Serine 226, asparagine 228, and serine 271 together coordinate dimethylallyl diphosphate. Isopentenyl diphosphate is bound by residues serine 226, asparagine 228, and serine 271.

It belongs to the IspH family. [4Fe-4S] cluster is required as a cofactor.

It catalyses the reaction isopentenyl diphosphate + 2 oxidized [2Fe-2S]-[ferredoxin] + H2O = (2E)-4-hydroxy-3-methylbut-2-enyl diphosphate + 2 reduced [2Fe-2S]-[ferredoxin] + 2 H(+). It carries out the reaction dimethylallyl diphosphate + 2 oxidized [2Fe-2S]-[ferredoxin] + H2O = (2E)-4-hydroxy-3-methylbut-2-enyl diphosphate + 2 reduced [2Fe-2S]-[ferredoxin] + 2 H(+). Its pathway is isoprenoid biosynthesis; dimethylallyl diphosphate biosynthesis; dimethylallyl diphosphate from (2E)-4-hydroxy-3-methylbutenyl diphosphate: step 1/1. The protein operates within isoprenoid biosynthesis; isopentenyl diphosphate biosynthesis via DXP pathway; isopentenyl diphosphate from 1-deoxy-D-xylulose 5-phosphate: step 6/6. Its function is as follows. Catalyzes the conversion of 1-hydroxy-2-methyl-2-(E)-butenyl 4-diphosphate (HMBPP) into a mixture of isopentenyl diphosphate (IPP) and dimethylallyl diphosphate (DMAPP). Acts in the terminal step of the DOXP/MEP pathway for isoprenoid precursor biosynthesis. This Bacillus cereus (strain AH820) protein is 4-hydroxy-3-methylbut-2-enyl diphosphate reductase.